The chain runs to 229 residues: Enolase-phosphatase E1 (229 aa).

It belongs to the HAD-like hydrolase superfamily. MasA/MtnC family. As to quaternary structure, monomer. Requires Mg(2+) as cofactor.

The enzyme catalyses 5-methylsulfanyl-2,3-dioxopentyl phosphate + H2O = 1,2-dihydroxy-5-(methylsulfanyl)pent-1-en-3-one + phosphate. Its pathway is amino-acid biosynthesis; L-methionine biosynthesis via salvage pathway; L-methionine from S-methyl-5-thio-alpha-D-ribose 1-phosphate: step 3/6. It functions in the pathway amino-acid biosynthesis; L-methionine biosynthesis via salvage pathway; L-methionine from S-methyl-5-thio-alpha-D-ribose 1-phosphate: step 4/6. In terms of biological role, bifunctional enzyme that catalyzes the enolization of 2,3-diketo-5-methylthiopentyl-1-phosphate (DK-MTP-1-P) into the intermediate 2-hydroxy-3-keto-5-methylthiopentenyl-1-phosphate (HK-MTPenyl-1-P), which is then dephosphorylated to form the acireductone 1,2-dihydroxy-3-keto-5-methylthiopentene (DHK-MTPene). This is Enolase-phosphatase E1 from Pectobacterium atrosepticum (strain SCRI 1043 / ATCC BAA-672) (Erwinia carotovora subsp. atroseptica).